A 1230-amino-acid polypeptide reads, in one-letter code: ATP-dependent helicase/nuclease subunit A (1230 aa).

Residues 4–480 (RNWTGPQEAA…IDLSHNFRSR (477 aa)) enclose the UvrD-like helicase ATP-binding domain. 25–32 (AGAGSGKT) is a binding site for ATP. A UvrD-like helicase C-terminal domain is found at 517–799 (AQLEGSGPPV…RIMSIHQAKG (283 aa)). Residues 535–554 (TSVGRDTAGTADDEPDRSDE) form a disordered region. The span at 545–554 (ADDEPDRSDE) shows a compositional bias: acidic residues.

It belongs to the helicase family. AddA subfamily. As to quaternary structure, heterodimer of AddA and AddB/RexB. It depends on Mg(2+) as a cofactor.

It carries out the reaction Couples ATP hydrolysis with the unwinding of duplex DNA by translocating in the 3'-5' direction.. The enzyme catalyses ATP + H2O = ADP + phosphate + H(+). Its function is as follows. The heterodimer acts as both an ATP-dependent DNA helicase and an ATP-dependent, dual-direction single-stranded exonuclease. Recognizes the chi site generating a DNA molecule suitable for the initiation of homologous recombination. The AddA nuclease domain is required for chi fragment generation; this subunit has the helicase and 3' -&gt; 5' nuclease activities. In Desulforudis audaxviator (strain MP104C), this protein is ATP-dependent helicase/nuclease subunit A.